The sequence spans 365 residues: uncharacterized protein (365 aa).

Residues 18-46 (TAQEALTLIEKLDSDYKEKEEKITALSVH) are a coiled coil.

This is an uncharacterized protein from Bacillus subtilis (strain 168).